The primary structure comprises 75 residues: Small ribosomal subunit protein bS18 (75 aa).

Belongs to the bacterial ribosomal protein bS18 family. In terms of assembly, part of the 30S ribosomal subunit. Forms a tight heterodimer with protein bS6.

Its function is as follows. Binds as a heterodimer with protein bS6 to the central domain of the 16S rRNA, where it helps stabilize the platform of the 30S subunit. This Saccharophagus degradans (strain 2-40 / ATCC 43961 / DSM 17024) protein is Small ribosomal subunit protein bS18.